Reading from the N-terminus, the 96-residue chain is UPF0235 protein VIBHAR_03581 (96 aa).

It belongs to the UPF0235 family.

The sequence is that of UPF0235 protein VIBHAR_03581 from Vibrio campbellii (strain ATCC BAA-1116).